The following is a 332-amino-acid chain: Ribosomal RNA small subunit methyltransferase C (332 aa).

It belongs to the methyltransferase superfamily. RsmC family. Monomer.

The protein resides in the cytoplasm. The enzyme catalyses guanosine(1207) in 16S rRNA + S-adenosyl-L-methionine = N(2)-methylguanosine(1207) in 16S rRNA + S-adenosyl-L-homocysteine + H(+). In terms of biological role, specifically methylates the guanine in position 1207 of 16S rRNA in the 30S particle. This chain is Ribosomal RNA small subunit methyltransferase C, found in Pseudomonas syringae pv. syringae (strain B728a).